Here is a 215-residue protein sequence, read N- to C-terminus: Cytochrome b6 (215 aa).

The chain crosses the membrane as a helical span at residues 32-52 (IFYCLGGITLTCFIVQVATGF). C35 is a heme c binding site. Positions 86 and 100 each coordinate heme b. 3 consecutive transmembrane segments (helical) span residues 90–110 (ASMM…TGGF), 116–136 (LTWV…VTGY), and 186–206 (AHTF…FVMI). The heme b site is built by H187 and H202.

This sequence belongs to the cytochrome b family. PetB subfamily. The 4 large subunits of the cytochrome b6-f complex are cytochrome b6, subunit IV (17 kDa polypeptide, PetD), cytochrome f and the Rieske protein, while the 4 small subunits are PetG, PetL, PetM and PetN. The complex functions as a dimer. Requires heme b as cofactor. Heme c serves as cofactor.

It is found in the plastid. It localises to the chloroplast thylakoid membrane. Component of the cytochrome b6-f complex, which mediates electron transfer between photosystem II (PSII) and photosystem I (PSI), cyclic electron flow around PSI, and state transitions. The chain is Cytochrome b6 from Emiliania huxleyi (Coccolithophore).